A 95-amino-acid chain; its full sequence is uncharacterized protein (95 aa).

The presence of the two linear plasmids, termed pGKL1 and pGKL2, in strains of Kluyveromyces lactis confers the killer phenotype to the host cell, by promoting the secretion of a toxin able to inhibit the growth of sensitive strains. This is an uncharacterized protein from Kluyveromyces lactis (strain ATCC 8585 / CBS 2359 / DSM 70799 / NBRC 1267 / NRRL Y-1140 / WM37) (Yeast).